Consider the following 362-residue polypeptide: Holliday junction branch migration complex subunit RuvB (362 aa).

Residues P4–Y186 are large ATPase domain (RuvB-L). Residues I25, R26, G67, K70, T71, T72, E133–F135, R176, Y186, and R223 contribute to the ATP site. T71 lines the Mg(2+) pocket. The segment at E187 to E257 is small ATPAse domain (RuvB-S). Residues R260–V362 are head domain (RuvB-H). Residues R296, R315, and R320 each contribute to the DNA site.

Belongs to the RuvB family. As to quaternary structure, homohexamer. Forms an RuvA(8)-RuvB(12)-Holliday junction (HJ) complex. HJ DNA is sandwiched between 2 RuvA tetramers; dsDNA enters through RuvA and exits via RuvB. An RuvB hexamer assembles on each DNA strand where it exits the tetramer. Each RuvB hexamer is contacted by two RuvA subunits (via domain III) on 2 adjacent RuvB subunits; this complex drives branch migration. In the full resolvosome a probable DNA-RuvA(4)-RuvB(12)-RuvC(2) complex forms which resolves the HJ.

Its subcellular location is the cytoplasm. The enzyme catalyses ATP + H2O = ADP + phosphate + H(+). Functionally, the RuvA-RuvB-RuvC complex processes Holliday junction (HJ) DNA during genetic recombination and DNA repair, while the RuvA-RuvB complex plays an important role in the rescue of blocked DNA replication forks via replication fork reversal (RFR). RuvA specifically binds to HJ cruciform DNA, conferring on it an open structure. The RuvB hexamer acts as an ATP-dependent pump, pulling dsDNA into and through the RuvAB complex. RuvB forms 2 homohexamers on either side of HJ DNA bound by 1 or 2 RuvA tetramers; 4 subunits per hexamer contact DNA at a time. Coordinated motions by a converter formed by DNA-disengaged RuvB subunits stimulates ATP hydrolysis and nucleotide exchange. Immobilization of the converter enables RuvB to convert the ATP-contained energy into a lever motion, pulling 2 nucleotides of DNA out of the RuvA tetramer per ATP hydrolyzed, thus driving DNA branch migration. The RuvB motors rotate together with the DNA substrate, which together with the progressing nucleotide cycle form the mechanistic basis for DNA recombination by continuous HJ branch migration. Branch migration allows RuvC to scan DNA until it finds its consensus sequence, where it cleaves and resolves cruciform DNA. The sequence is that of Holliday junction branch migration complex subunit RuvB from Rhodospirillum centenum (strain ATCC 51521 / SW).